Here is a 235-residue protein sequence, read N- to C-terminus: Small ribosomal subunit protein eS4 (235 aa).

An S4 RNA-binding domain is found at 37–110; that stretch reads LPLGLIIRDV…KGRLVLYKLN (74 aa).

The protein belongs to the eukaryotic ribosomal protein eS4 family.

The protein is Small ribosomal subunit protein eS4 of Methanosarcina mazei (strain ATCC BAA-159 / DSM 3647 / Goe1 / Go1 / JCM 11833 / OCM 88) (Methanosarcina frisia).